The following is a 220-amino-acid chain: DNA-directed RNA polymerase subunit alpha (220 aa).

It belongs to the RNA polymerase alpha chain family. In terms of assembly, in plastids the minimal PEP RNA polymerase catalytic core is composed of four subunits: alpha, beta, beta', and beta''. When a (nuclear-encoded) sigma factor is associated with the core the holoenzyme is formed, which can initiate transcription.

The protein localises to the plastid. The catalysed reaction is RNA(n) + a ribonucleoside 5'-triphosphate = RNA(n+1) + diphosphate. Functionally, DNA-dependent RNA polymerase catalyzes the transcription of DNA into RNA using the four ribonucleoside triphosphates as substrates. The protein is DNA-directed RNA polymerase subunit alpha (rpoA) of Euglena longa (Euglenophycean alga).